A 389-amino-acid chain; its full sequence is S-adenosylmethionine synthase (389 aa).

Histidine 17 is an ATP binding site. Aspartate 19 provides a ligand contact to Mg(2+). Position 45 (glutamate 45) interacts with K(+). Positions 58 and 101 each coordinate L-methionine. The tract at residues 101–111 is flexible loop; that stretch reads QSPDIAQGVNP. Residues 168-170, 234-235, aspartate 243, 249-250, and lysine 270 each bind ATP; these read DGK, RF, and RK. Aspartate 243 serves as a coordination point for L-methionine. Lysine 274 serves as a coordination point for L-methionine.

This sequence belongs to the AdoMet synthase family. In terms of assembly, homotetramer; dimer of dimers. The cofactor is Mg(2+). K(+) serves as cofactor.

It is found in the cytoplasm. It catalyses the reaction L-methionine + ATP + H2O = S-adenosyl-L-methionine + phosphate + diphosphate. It functions in the pathway amino-acid biosynthesis; S-adenosyl-L-methionine biosynthesis; S-adenosyl-L-methionine from L-methionine: step 1/1. In terms of biological role, catalyzes the formation of S-adenosylmethionine (AdoMet) from methionine and ATP. The overall synthetic reaction is composed of two sequential steps, AdoMet formation and the subsequent tripolyphosphate hydrolysis which occurs prior to release of AdoMet from the enzyme. This Syntrophobacter fumaroxidans (strain DSM 10017 / MPOB) protein is S-adenosylmethionine synthase.